The following is a 65-amino-acid chain: Large ribosomal subunit protein bL32 (65 aa).

Basic residues predominate over residues 1-18; that stretch reads MAVPKRRHSKSRTRKRRS. Residues 1-20 are disordered; it reads MAVPKRRHSKSRTRKRRSTY.

Belongs to the bacterial ribosomal protein bL32 family.

The sequence is that of Large ribosomal subunit protein bL32 from Salinibacter ruber (strain DSM 13855 / M31).